We begin with the raw amino-acid sequence, 529 residues long: Bifunctional purine biosynthesis protein PurH (529 aa).

One can recognise an MGS-like domain in the interval 1–148 (MQQRRPVRRA…KNHKDVAIVV (148 aa)).

The protein belongs to the PurH family.

It catalyses the reaction (6R)-10-formyltetrahydrofolate + 5-amino-1-(5-phospho-beta-D-ribosyl)imidazole-4-carboxamide = 5-formamido-1-(5-phospho-D-ribosyl)imidazole-4-carboxamide + (6S)-5,6,7,8-tetrahydrofolate. The enzyme catalyses IMP + H2O = 5-formamido-1-(5-phospho-D-ribosyl)imidazole-4-carboxamide. It functions in the pathway purine metabolism; IMP biosynthesis via de novo pathway; 5-formamido-1-(5-phospho-D-ribosyl)imidazole-4-carboxamide from 5-amino-1-(5-phospho-D-ribosyl)imidazole-4-carboxamide (10-formyl THF route): step 1/1. Its pathway is purine metabolism; IMP biosynthesis via de novo pathway; IMP from 5-formamido-1-(5-phospho-D-ribosyl)imidazole-4-carboxamide: step 1/1. This Salmonella paratyphi B (strain ATCC BAA-1250 / SPB7) protein is Bifunctional purine biosynthesis protein PurH.